The sequence spans 452 residues: Pup--protein ligase (452 aa).

Glu9 lines the Mg(2+) pocket. An ATP-binding site is contributed by Arg53. Tyr55 is a binding site for Mg(2+). Catalysis depends on Asp57, which acts as the Proton acceptor. Residue Glu63 participates in Mg(2+) binding. Residues Thr66 and Trp419 each coordinate ATP.

Belongs to the Pup ligase/Pup deamidase family. Pup-conjugating enzyme subfamily.

It catalyses the reaction ATP + [prokaryotic ubiquitin-like protein]-L-glutamate + [protein]-L-lysine = ADP + phosphate + N(6)-([prokaryotic ubiquitin-like protein]-gamma-L-glutamyl)-[protein]-L-lysine.. It functions in the pathway protein degradation; proteasomal Pup-dependent pathway. The protein operates within protein modification; protein pupylation. Functionally, catalyzes the covalent attachment of the prokaryotic ubiquitin-like protein modifier Pup to the proteasomal substrate proteins, thereby targeting them for proteasomal degradation. This tagging system is termed pupylation. The ligation reaction involves the side-chain carboxylate of the C-terminal glutamate of Pup and the side-chain amino group of a substrate lysine. This is Pup--protein ligase from Geodermatophilus obscurus (strain ATCC 25078 / DSM 43160 / JCM 3152 / CCUG 61914 / KCC A-0152 / KCTC 9177 / NBRC 13315 / NRRL B-3577 / G-20).